The primary structure comprises 716 residues: ATP-dependent DNA helicase DinG (716 aa).

In terms of domain architecture, Helicase ATP-binding spans 17 to 294 (ALQEQIPDFI…TCMEQFRPKT (278 aa)). 54–61 (APTGVGKT) is an ATP binding site. Position 120 (cysteine 120) interacts with [4Fe-4S] cluster. Positions 131 to 134 (EPTQ) match the DEAH box motif. Cysteine 194, cysteine 199, and cysteine 205 together coordinate [4Fe-4S] cluster. The DEAH box motif lies at 248–251 (DEGH). Positions 517–698 (HIAEMAAFFR…VFPIEQPEVP (182 aa)) constitute a Helicase C-terminal domain.

It belongs to the helicase family. DinG subfamily. Type 1 sub-subfamily. Requires [4Fe-4S] cluster as cofactor.

The enzyme catalyses Couples ATP hydrolysis with the unwinding of duplex DNA at the replication fork by translocating in the 5'-3' direction. This creates two antiparallel DNA single strands (ssDNA). The leading ssDNA polymer is the template for DNA polymerase III holoenzyme which synthesizes a continuous strand.. It catalyses the reaction ATP + H2O = ADP + phosphate + H(+). In terms of biological role, DNA-dependent ATPase and 5'-3' DNA helicase. Unwinds D-loops, R-loops, forked DNA and G-quadruplex DNA. This chain is ATP-dependent DNA helicase DinG, found in Escherichia coli O157:H7.